The primary structure comprises 487 residues: GTPase Der (487 aa).

EngA-type G domains follow at residues 5–169 and 178–351; these read PKLA…SREI and IKVA…ANSQ. GTP is bound by residues 11 to 18, 58 to 62, 121 to 124, 184 to 191, 231 to 235, and 296 to 299; these read GRPNVGKS, DTGGI, NKID, GRANVGKS, DTAGI, and NKWD. The 88-residue stretch at 352–439 folds into the KH-like domain; sequence KRITTHQLNK…IHLKGKTKKD (88 aa). The disordered stretch occupies residues 441-466; sequence PVSSLSLTRKQTKSTDQENNEYDELY.

The protein belongs to the TRAFAC class TrmE-Era-EngA-EngB-Septin-like GTPase superfamily. EngA (Der) GTPase family. Associates with the 50S ribosomal subunit.

Its function is as follows. GTPase that plays an essential role in the late steps of ribosome biogenesis. The chain is GTPase Der from Protochlamydia amoebophila (strain UWE25).